The chain runs to 217 residues: Carbon disulfide hydrolase (217 aa).

Zn(2+) is bound by residues Cys-39, His-98, and Cys-101. Residues 192–217 (DKEKRARTDCTPTPYGVKGNQPPRWK) form a disordered region.

This sequence belongs to the beta-class carbonic anhydrase family. Forms only homooctamers in solution. It depends on Zn(2+) as a cofactor.

It carries out the reaction carbon disulfide + 2 H2O = 2 hydrogen sulfide + CO2 + 2 H(+). It functions in the pathway sulfur metabolism; hydrogen sulfide biosynthesis. In terms of biological role, catalyzes the conversion of carbon disulfide into hydrogen sulfide and carbon dioxide, with carbonyl sulfide as an intermediate. Likely plays a key role in sulfur metabolism that allows A.thiooxidans S1p to grow on carbon disulfide as the main carbon and energy source. Does not show carbonic anhydrase activity (hydration of CO(2) to carbonate). The chain is Carbon disulfide hydrolase from Acidithiobacillus thiooxidans (Thiobacillus thiooxidans).